The following is a 142-amino-acid chain: Large ribosomal subunit protein uL13 (142 aa).

Belongs to the universal ribosomal protein uL13 family. Part of the 50S ribosomal subunit.

Its function is as follows. This protein is one of the early assembly proteins of the 50S ribosomal subunit, although it is not seen to bind rRNA by itself. It is important during the early stages of 50S assembly. In Histophilus somni (Haemophilus somnus), this protein is Large ribosomal subunit protein uL13.